Reading from the N-terminus, the 451-residue chain is tRNA-2-methylthio-N(6)-dimethylallyladenosine synthase (451 aa).

The MTTase N-terminal domain maps to 5 to 121 (RQYHITTFGC…LQDLLEQVEG (117 aa)). Positions 14, 50, 84, 156, 160, and 163 each coordinate [4Fe-4S] cluster. The 238-residue stretch at 142–379 (RDSTVTAWVN…NHLVAQKAAE (238 aa)) folds into the Radical SAM core domain. Positions 382–446 (QRYAGRIEEV…AFSLTGEAVE (65 aa)) constitute a TRAM domain.

Belongs to the methylthiotransferase family. MiaB subfamily. Monomer. [4Fe-4S] cluster serves as cofactor.

The protein localises to the cytoplasm. The catalysed reaction is N(6)-dimethylallyladenosine(37) in tRNA + (sulfur carrier)-SH + AH2 + 2 S-adenosyl-L-methionine = 2-methylsulfanyl-N(6)-dimethylallyladenosine(37) in tRNA + (sulfur carrier)-H + 5'-deoxyadenosine + L-methionine + A + S-adenosyl-L-homocysteine + 2 H(+). Functionally, catalyzes the methylthiolation of N6-(dimethylallyl)adenosine (i(6)A), leading to the formation of 2-methylthio-N6-(dimethylallyl)adenosine (ms(2)i(6)A) at position 37 in tRNAs that read codons beginning with uridine. The protein is tRNA-2-methylthio-N(6)-dimethylallyladenosine synthase of Picosynechococcus sp. (strain ATCC 27264 / PCC 7002 / PR-6) (Agmenellum quadruplicatum).